Consider the following 455-residue polypeptide: Dihydrolipoyllysine-residue succinyltransferase component of 2-oxoglutarate dehydrogenase complex, mitochondrial (455 aa).

The N-terminal 68 residues, 1–68, are a transit peptide targeting the mitochondrion; the sequence is MLSRSRCASR…RFFRTTAVCK (68 aa). Positions 71–145 constitute a Lipoyl-binding domain; that stretch reads VITVKTPAFA…EGGTPLFTLR (75 aa). Ser-82 is modified (phosphoserine). Lys-111 bears the N6-lipoyllysine mark. Lys-155 is subject to N6-acetyllysine. A compositionally biased stretch (low complexity) spans 155–173; sequence KPAAAPAAAAPKAEPTVSA. Residues 155–220 form a disordered region; that stretch reads KPAAAPAAAA…PRAEAGAGVG (66 aa). Residues 174–193 show a composition bias toward pro residues; that stretch reads VPPPPAAPIPTQMPPVPSPS. N6-acetyllysine is present on residues Lys-269, Lys-274, Lys-275, Lys-279, and Lys-309. Catalysis depends on residues His-426 and Asp-430.

This sequence belongs to the 2-oxoacid dehydrogenase family. In terms of assembly, the 2-oxoglutarate dehydrogenase complex is composed of OGDH (2-oxoglutarate dehydrogenase; E1), DLST (dihydrolipoamide succinyltransferase; E2), DLD (dihydrolipoamide dehydrogenase; E3) and the assembly factor KGD4. It contains multiple copies of the three enzymatic components (E1, E2 and E3). In the nucleus, the 2-oxoglutarate dehydrogenase complex associates with KAT2A. Interacts with ABHD11; this interaction maintains the functional lipoylation of the 2-oxoglutarate dehydrogenase complex. Requires (R)-lipoate as cofactor.

The protein resides in the mitochondrion matrix. Its subcellular location is the nucleus. The enzyme catalyses N(6)-[(R)-dihydrolipoyl]-L-lysyl-[protein] + succinyl-CoA = N(6)-[(R)-S(8)-succinyldihydrolipoyl]-L-lysyl-[protein] + CoA. It participates in amino-acid degradation; L-lysine degradation via saccharopine pathway; glutaryl-CoA from L-lysine: step 6/6. It functions in the pathway carbohydrate metabolism; tricarboxylic acid cycle. Dihydrolipoamide succinyltransferase (E2) component of the 2-oxoglutarate dehydrogenase complex. The 2-oxoglutarate dehydrogenase complex catalyzes the overall conversion of 2-oxoglutarate to succinyl-CoA and CO(2). The 2-oxoglutarate dehydrogenase complex is mainly active in the mitochondrion. A fraction of the 2-oxoglutarate dehydrogenase complex also localizes in the nucleus and is required for lysine succinylation of histones: associates with KAT2A on chromatin and provides succinyl-CoA to histone succinyltransferase KAT2A. The sequence is that of Dihydrolipoyllysine-residue succinyltransferase component of 2-oxoglutarate dehydrogenase complex, mitochondrial from Bos taurus (Bovine).